The primary structure comprises 420 residues: Glutamate-1-semialdehyde 2,1-aminomutase (420 aa).

At K261 the chain carries N6-(pyridoxal phosphate)lysine.

The protein belongs to the class-III pyridoxal-phosphate-dependent aminotransferase family. HemL subfamily. Pyridoxal 5'-phosphate is required as a cofactor.

It localises to the cytoplasm. The catalysed reaction is (S)-4-amino-5-oxopentanoate = 5-aminolevulinate. It functions in the pathway porphyrin-containing compound metabolism; protoporphyrin-IX biosynthesis; 5-aminolevulinate from L-glutamyl-tRNA(Glu): step 2/2. This is Glutamate-1-semialdehyde 2,1-aminomutase from Thermoplasma volcanium (strain ATCC 51530 / DSM 4299 / JCM 9571 / NBRC 15438 / GSS1).